The chain runs to 89 residues: UPF0237 protein LMOf2365_0562 (89 aa).

An ACT domain is found at 4–78; that stretch reads VLTVIGKDNV…EDLQVKIHIQ (75 aa).

The protein belongs to the UPF0237 family.

The polypeptide is UPF0237 protein LMOf2365_0562 (Listeria monocytogenes serotype 4b (strain F2365)).